The chain runs to 281 residues: Large ribosomal subunit protein uL2 (281 aa).

Residues 223-281 form a disordered region; that stretch reads VRGSVMNPVDHPHGGGEGKQPVGRKSPLTPWGKIALGVKTRKTKKSSNKLILRRRKDAK. The span at 261 to 281 shows a compositional bias: basic residues; the sequence is KTRKTKKSSNKLILRRRKDAK.

Belongs to the universal ribosomal protein uL2 family. As to quaternary structure, part of the 50S ribosomal subunit. Forms a bridge to the 30S subunit in the 70S ribosome.

One of the primary rRNA binding proteins. Required for association of the 30S and 50S subunits to form the 70S ribosome, for tRNA binding and peptide bond formation. It has been suggested to have peptidyltransferase activity; this is somewhat controversial. Makes several contacts with the 16S rRNA in the 70S ribosome. The polypeptide is Large ribosomal subunit protein uL2 (Mycoplasmopsis synoviae (strain 53) (Mycoplasma synoviae)).